A 485-amino-acid chain; its full sequence is ATP synthase subunit beta (485 aa).

Basic and acidic residues predominate over residues 1 to 11; that stretch reads MPATETADKNT. Residues 1–20 are disordered; it reads MPATETADKNTKSANSDTSG. 170-177 provides a ligand contact to ATP; it reads GGAGVGKT.

This sequence belongs to the ATPase alpha/beta chains family. F-type ATPases have 2 components, CF(1) - the catalytic core - and CF(0) - the membrane proton channel. CF(1) has five subunits: alpha(3), beta(3), gamma(1), delta(1), epsilon(1). CF(0) has three main subunits: a(1), b(2) and c(9-12). The alpha and beta chains form an alternating ring which encloses part of the gamma chain. CF(1) is attached to CF(0) by a central stalk formed by the gamma and epsilon chains, while a peripheral stalk is formed by the delta and b chains.

It is found in the cell membrane. It catalyses the reaction ATP + H2O + 4 H(+)(in) = ADP + phosphate + 5 H(+)(out). Its function is as follows. Produces ATP from ADP in the presence of a proton gradient across the membrane. The catalytic sites are hosted primarily by the beta subunits. This Mycolicibacterium paratuberculosis (strain ATCC BAA-968 / K-10) (Mycobacterium paratuberculosis) protein is ATP synthase subunit beta.